The sequence spans 174 residues: CASP-like protein 1 (174 aa).

A disordered region spans residues 1 to 25 (MDSKSGRSESAINIPESNSTKHKST). Over 1 to 46 (MDSKSGRSESAINIPESNSTKHKSTAVHTATKVAAVAPRGGGWRRG) the chain is Cytoplasmic. Residues 8-18 (SESAINIPESN) show a composition bias toward polar residues. Residues 47-67 (VSIFDFILRICALAAALAATA) form a helical membrane-spanning segment. The Extracellular portion of the chain corresponds to 68-96 (TMGTTDQTLPFFTQIIQFQASYDDLPVFT). The helical transmembrane segment at 97–117 (FFVVANGIASGYLVLSLPFSI) threads the bilayer. The Cytoplasmic segment spans residues 118–119 (AT). Residues 120–139 (IVRPHAAAIKLLLIIFDTQF) form a helical membrane-spanning segment. Residues 140–150 (NDFCQRVSGAV) lie on the Extracellular side of the membrane. The chain crosses the membrane as a helical span at residues 151 to 171 (VASFVAAVILIFLVVLSAVAI). At 172-174 (RKH) the chain is on the cytoplasmic side.

This sequence belongs to the Casparian strip membrane proteins (CASP) family. Homodimer and heterodimers.

Its subcellular location is the cell membrane. This chain is CASP-like protein 1, found in Triphysaria pusilla (Dwarf owl's-clover).